Reading from the N-terminus, the 261-residue chain is Type III pantothenate kinase (261 aa).

6 to 13 (DVGNTNTV) is a binding site for ATP. 107–110 (GADR) provides a ligand contact to substrate. The active-site Proton acceptor is Asp109. Residue Asp129 coordinates K(+). Thr132 is an ATP binding site. Thr183 serves as a coordination point for substrate.

Belongs to the type III pantothenate kinase family. As to quaternary structure, homodimer. It depends on NH4(+) as a cofactor. K(+) is required as a cofactor.

Its subcellular location is the cytoplasm. It carries out the reaction (R)-pantothenate + ATP = (R)-4'-phosphopantothenate + ADP + H(+). Its pathway is cofactor biosynthesis; coenzyme A biosynthesis; CoA from (R)-pantothenate: step 1/5. Functionally, catalyzes the phosphorylation of pantothenate (Pan), the first step in CoA biosynthesis. This Kosmotoga olearia (strain ATCC BAA-1733 / DSM 21960 / TBF 19.5.1) protein is Type III pantothenate kinase.